The sequence spans 301 residues: 33 kDa chaperonin (301 aa).

2 disulfide bridges follow: C244–C246 and C277–C280.

The protein belongs to the HSP33 family. Under oxidizing conditions two disulfide bonds are formed involving the reactive cysteines. Under reducing conditions zinc is bound to the reactive cysteines and the protein is inactive.

It localises to the cytoplasm. In terms of biological role, redox regulated molecular chaperone. Protects both thermally unfolding and oxidatively damaged proteins from irreversible aggregation. Plays an important role in the bacterial defense system toward oxidative stress. This chain is 33 kDa chaperonin, found in Geobacter sulfurreducens (strain ATCC 51573 / DSM 12127 / PCA).